The chain runs to 332 residues: MTISLKTAPLLEVSNLSVDFRTDGGWINAVDDVNFTLAPRETLGLVGESGSGKSVTALSLLRLHDQRNSRLGGSVRYKGEDLFTLATSRLQQIRGHEIAMVFQDPIHTLNPVLTIGRQIEEGLRLHHGLQGREARKRAIELLDRVRIPDVARRIDEYPHRMSGGQRQRVMIAIAIAGDPKILIADEPTTALDVTVQAQIMELLRNLRDELSMSVILISHDLGLVSEFADRAMVMYAGQPVETGPINKIFDEPLHPYTEGLLSAIPDLDDDLDRLPTIPGSIPEPSRRPPGCRFAPRCTFAQASCVKPQPIMSLTGGRASRCPPRLPTEECVL.

Residues 11–261 (LEVSNLSVDF…PLHPYTEGLL (251 aa)) enclose the ABC transporter domain. Residue 47–54 (GESGSGKS) participates in ATP binding.

The protein belongs to the ABC transporter superfamily. In terms of assembly, the complex is composed of two ATP-binding proteins (BMEII0205 and BMEII0206), two transmembrane proteins (BMEII0207/BMEII0208 and BMEII0209) and a solute-binding protein (BMEII0210).

Its subcellular location is the cell inner membrane. Probably part of an ABC transporter complex that could be involved in peptide import. Probably responsible for energy coupling to the transport system. The protein is Putative peptide import ATP-binding protein BMEII0206 of Brucella melitensis biotype 1 (strain ATCC 23456 / CCUG 17765 / NCTC 10094 / 16M).